Here is a 595-residue protein sequence, read N- to C-terminus: DNA mismatch repair protein MutL (595 aa).

It belongs to the DNA mismatch repair MutL/HexB family.

Its function is as follows. This protein is involved in the repair of mismatches in DNA. It is required for dam-dependent methyl-directed DNA mismatch repair. May act as a 'molecular matchmaker', a protein that promotes the formation of a stable complex between two or more DNA-binding proteins in an ATP-dependent manner without itself being part of a final effector complex. This is DNA mismatch repair protein MutL from Rhodopseudomonas palustris (strain TIE-1).